A 2849-amino-acid polypeptide reads, in one-letter code: Polycystin-1-like protein 1 (2849 aa).

Over 1–1748 (MAEEAAQNIS…SDISKLQSHP (1748 aa)) the chain is Extracellular. 13 N-linked (GlcNAc...) asparagine glycosylation sites follow: asparagine 8, asparagine 295, asparagine 338, asparagine 376, asparagine 447, asparagine 482, asparagine 514, asparagine 605, asparagine 657, asparagine 751, asparagine 875, asparagine 926, and asparagine 937. PKD domains follow at residues 508-590 (SVSV…VQKK) and 592-673 (VANR…VCEP). The REJ domain maps to 674–1571 (CQPPLVKNMG…GEEDGLDNRR (898 aa)). Low complexity predominate over residues 970–987 (NLLPTEPGTADPDATTTP). Disordered regions lie at residues 970-1068 (NLLP…PHLS) and 1081-1118 (IPSG…DPSL). Positions 1053–1068 (RSERSQPTHSPDPHLS) are enriched in basic and acidic residues. N-linked (GlcNAc...) asparagine glycosylation is found at asparagine 1233, asparagine 1301, asparagine 1306, asparagine 1572, asparagine 1681, and asparagine 1716. In terms of domain architecture, GAIN-B spans 1587–1735 (QFTELSENPQ…ALLRRKLKAS (149 aa)). The cysteines at positions 1691 and 1717 are disulfide-linked. Positions 1691–1735 (CLFWDKREWKSERFSPQPGTSPEKVNCSYHRLAAFALLRRKLKAS) are GPS. The chain crosses the membrane as a helical span at residues 1749–1769 (ENLLPSIFIMGSVILYGFLVA). At 1770 to 1956 (KSRQVDHHEK…SSSRYLHTPR (187 aa)) the chain is on the cytoplasmic side. The 118-residue stretch at 1796-1913 (QLYAVVIDTG…HDGRVERELT (118 aa)) folds into the PLAT domain. The chain crosses the membrane as a helical span at residues 1957–1977 (LTVSFSLLCVYACLTALVAAG). At 1978–1992 (GQEQPHLDVSPTLGS) the chain is on the extracellular side. A helical transmembrane segment spans residues 1993-2013 (FRVGLLCTLLASPGAQLLSLL). Topologically, residues 2014–2135 (FRLSKEAPGS…SRALQPWWSS (122 aa)) are cytoplasmic. Positions 2023 to 2089 (SARVEPHSPL…GTACPAPKLQ (67 aa)) are disordered. The chain crosses the membrane as a helical span at residues 2136–2156 (AVWAICGTASLACSLGTGFLA). The Extracellular portion of the chain corresponds to 2157 to 2174 (YRFGQEQCVQWLHLLSLS). The chain crosses the membrane as a helical span at residues 2175-2195 (VVCCIFITQPLMVCLMALGFA). Over 2196-2281 (WKRRADNHFF…QRMRRESRTR (86 aa)) the chain is Cytoplasmic. Residues 2282-2302 (AALRDISMDILMLLLLLCVIY) form a helical membrane-spanning segment. Residues 2303–2522 (GRFSQDEYSL…FRSDSALQYH (220 aa)) are Extracellular-facing. Asparagine 2426 is a glycosylation site (N-linked (GlcNAc...) asparagine). The chain crosses the membrane as a helical span at residues 2523-2543 (LMLPQLVFLALSLIHLCVQLY). Over 2544 to 2562 (RMMDKGVLSYWRKPRNWLE) the chain is Cytoplasmic. A helical transmembrane segment spans residues 2563-2583 (LSVVGVSLTYYAVSGHLVTLA). Topologically, residues 2584–2616 (GDVTNQFHRGLCRAFMDLTLMASWNQRARWLRG) are extracellular. A helical transmembrane segment spans residues 2617–2637 (ILLFLFTLKCVYLPGIQNTMA). Over 2638–2646 (SCSSMMRHS) the chain is Cytoplasmic. A helical membrane pass occupies residues 2647–2667 (LPSIFVAGLVGALMLAALSHL). The Extracellular segment spans residues 2668–2711 (HRFLLSMWVLPPGTFTDAFPGLLFHFPRRSQKDCLLGLSKSDQR). Residues 2712–2732 (AMACYFGILLIVSATLCFGML) traverse the membrane as a helical segment. Residues 2733–2849 (RGFLMTLPQK…AAEPADIKDF (117 aa)) are Cytoplasmic-facing.

It belongs to the polycystin family. In terms of assembly, heterodimer. Interacts with PKD2 to form a calcium channel. Interacts with PKD2L1; to form ciliary calcium channel. May interact with GNA12, GNAS, GNAI1 and GNAI2. Detected in testis and in fetal and adult heart.

It is found in the cell projection. The protein localises to the cilium membrane. Component of a calcium-permeant ion channel formed by PKD1L2 and PKD1L1 in primary cilia, where it controls cilium calcium concentration, without affecting cytoplasmic calcium concentration, and regulates sonic hedgehog/SHH signaling and GLI2 transcription. The PKD1L1:PKD2L1 channel complex is mechanosensitive only at high pressures and is highly temperature sensitive. Also involved in left/right axis specification downstream of nodal flow by forming a complex with PKD2 in cilia to facilitate flow detection in left/right patterning. May function as a G-protein-coupled receptor. This Homo sapiens (Human) protein is Polycystin-1-like protein 1.